We begin with the raw amino-acid sequence, 450 residues long: Tubulin alpha chain, testis-specific (450 aa).

Positions 1-4 match the MREC motif motif; that stretch reads MREC. A GTP-binding site is contributed by Q11. At K40 the chain carries N6-acetyllysine. Positions 71, 140, 144, 145, 179, 206, and 228 each coordinate GTP. Mg(2+) is bound at residue E71. The active site involves E254.

It belongs to the tubulin family. Dimer of alpha and beta chains. A typical microtubule is a hollow water-filled tube with an outer diameter of 25 nm and an inner diameter of 15 nM. Alpha-beta heterodimers associate head-to-tail to form protofilaments running lengthwise along the microtubule wall with the beta-tubulin subunit facing the microtubule plus end conferring a structural polarity. Microtubules usually have 13 protofilaments but different protofilament numbers can be found in some organisms and specialized cells. Requires Mg(2+) as cofactor. In terms of processing, some glutamate residues at the C-terminus are polyglycylated, resulting in polyglycine chains on the gamma-carboxyl group. Glycylation is mainly limited to tubulin incorporated into axonemes (cilia and flagella) whereas glutamylation is prevalent in neuronal cells, centrioles, axonemes, and the mitotic spindle. Both modifications can coexist on the same protein on adjacent residues, and lowering polyglycylation levels increases polyglutamylation, and reciprocally. The precise function of polyglycylation is still unclear. Post-translationally, some glutamate residues at the C-terminus are polyglutamylated, resulting in polyglutamate chains on the gamma-carboxyl group. Polyglutamylation plays a key role in microtubule severing by spastin (SPAST). SPAST preferentially recognizes and acts on microtubules decorated with short polyglutamate tails: severing activity by SPAST increases as the number of glutamates per tubulin rises from one to eight, but decreases beyond this glutamylation threshold. Acetylation of alpha chains at Lys-40 is located inside the microtubule lumen. This modification has been correlated with increased microtubule stability, intracellular transport and ciliary assembly. In terms of processing, undergoes a tyrosination/detyrosination cycle, the cyclic removal and re-addition of a C-terminal tyrosine residue by the enzymes tubulin tyrosine carboxypeptidase (MATCAP, VASH1 or VASH2) and tubulin tyrosine ligase (TTL), respectively. Post-translationally, tyrosination promotes microtubule interaction with CAP-Gly microtubule plus-end tracking proteins. Tyrosinated tubulins regulate the initiation of dynein-driven motility. Detyrosination is involved in metaphase plate congression by guiding chromosomes during mitosis. Detyrosination increases microtubules-dependent mechanotransduction in dystrophic cardiac and skeletal muscle. In cardiomyocytes, detyrosinated microtubules are required to resist to contractile compression during contraction. Testis specific.

The protein localises to the cytoplasm. It is found in the cytoskeleton. It catalyses the reaction GTP + H2O = GDP + phosphate + H(+). Its function is as follows. Tubulin is the major constituent of microtubules, a cylinder consisting of laterally associated linear protofilaments composed of alpha- and beta-tubulin heterodimers. Microtubules grow by the addition of GTP-tubulin dimers to the microtubule end, where a stabilizing cap forms. Below the cap, tubulin dimers are in GDP-bound state, owing to GTPase activity of alpha-tubulin. In Oncorhynchus mykiss (Rainbow trout), this protein is Tubulin alpha chain, testis-specific.